We begin with the raw amino-acid sequence, 87 residues long: Toxin ICK-41 (87 aa).

The signal sequence occupies residues Met1–Gly19. Cystine bridges form between Cys40–Cys54, Cys40–Cys77, Cys53–Cys66, and Cys80–Cys87.

The protein belongs to the neurotoxin 27 (Jztx-72) family. ICK-41 subfamily. As to expression, expressed by the venom gland.

It localises to the secreted. In terms of biological role, probable neurotoxin with ion channel impairing activity. The sequence is that of Toxin ICK-41 from Trittame loki (Brush-footed trapdoor spider).